The primary structure comprises 309 residues: Protease HtpX homolog (309 aa).

Transmembrane regions (helical) follow at residues 7 to 27 and 28 to 48; these read FILL…IGGP and TGML…YWNA. H134 contacts Zn(2+). E135 is a catalytic residue. A Zn(2+)-binding site is contributed by H138. The next 2 helical transmembrane spans lie at 149 to 169 and 177 to 197; these read VTAT…FFGG and PGGL…AMLV. E206 is a binding site for Zn(2+). Residues 289–309 are disordered; that stretch reads TRGRSGTAVPTGATGKSGPWG.

Belongs to the peptidase M48B family. Zn(2+) serves as cofactor.

It localises to the cell inner membrane. The polypeptide is Protease HtpX homolog (Caulobacter sp. (strain K31)).